The primary structure comprises 801 residues: Transducin beta-like protein 3 (801 aa).

Position 2 is an N-acetylalanine (Ala-2). 13 WD repeats span residues 64 to 105 (EDQE…RLWK), 107 to 146 (IHTA…GTHH), 149 to 190 (GSPG…CLAV), 193 to 232 (AHYS…TTRT), 245 to 284 (LPEQ…CVYT), 290 to 329 (GLRQ…LQKQ), 332 to 372 (GYSE…CQIL), 374 to 413 (GHTD…QVAC), 419 to 459 (GHTH…LAKS), 477 to 516 (CHDK…LLGV), 519 to 560 (GHRR…KTFE), 562 to 602 (HDAS…RTLD), and 604 to 642 (HEDK…EQAE). At Ser-257 the chain carries Phosphoserine. Residue Lys-407 forms a Glycyl lysine isopeptide (Lys-Gly) (interchain with G-Cter in SUMO2) linkage.

Part of the small subunit (SSU) processome, composed of more than 70 proteins and the RNA chaperone small nucleolar RNA (snoRNA) U3.

Its subcellular location is the nucleus. The protein resides in the nucleolus. In terms of biological role, part of the small subunit (SSU) processome, first precursor of the small eukaryotic ribosomal subunit. During the assembly of the SSU processome in the nucleolus, many ribosome biogenesis factors, an RNA chaperone and ribosomal proteins associate with the nascent pre-rRNA and work in concert to generate RNA folding, modifications, rearrangements and cleavage as well as targeted degradation of pre-ribosomal RNA by the RNA exosome. This Mus musculus (Mouse) protein is Transducin beta-like protein 3 (Tbl3).